We begin with the raw amino-acid sequence, 304 residues long: Methionyl-tRNA formyltransferase (304 aa).

107 to 110 serves as a coordination point for (6S)-5,6,7,8-tetrahydrofolate; sequence SLLP.

This sequence belongs to the Fmt family.

The enzyme catalyses L-methionyl-tRNA(fMet) + (6R)-10-formyltetrahydrofolate = N-formyl-L-methionyl-tRNA(fMet) + (6S)-5,6,7,8-tetrahydrofolate + H(+). Its function is as follows. Attaches a formyl group to the free amino group of methionyl-tRNA(fMet). The formyl group appears to play a dual role in the initiator identity of N-formylmethionyl-tRNA by promoting its recognition by IF2 and preventing the misappropriation of this tRNA by the elongation apparatus. The protein is Methionyl-tRNA formyltransferase of Coprothermobacter proteolyticus (strain ATCC 35245 / DSM 5265 / OCM 4 / BT).